Here is a 136-residue protein sequence, read N- to C-terminus: Probable disulfide formation protein (136 aa).

Residues 7 to 26 (SYALYFAWAISCAGTLISIF) form a helical membrane-spanning segment. Cysteine 36 and cysteine 39 form a disulfide bridge. The next 2 helical transmembrane spans lie at 41–60 (YQRI…AYRE) and 67–84 (YILP…YQVF). A disulfide bridge links cysteine 96 with cysteine 101. Residues 109-131 (SYVTIPMASVVAFGAIVCLLVLT) traverse the membrane as a helical segment.

The protein belongs to the DsbB family. BdbC subfamily.

It localises to the cell inner membrane. Required for disulfide bond formation in some proteins. This is Probable disulfide formation protein from Chlamydia pneumoniae (Chlamydophila pneumoniae).